Reading from the N-terminus, the 319-residue chain is Dehydrogenase/reductase SDR family member 9 (319 aa).

The signal sequence occupies residues 1–17; sequence MLFWVLGLLILCGFLWT. NAD(+)-binding positions include 34–58 and D83; that span reads ITGCDSGFGNLAARTFDKKGFHVIA. Substrate is bound at residue S164. Residue Y176 is the Proton acceptor of the active site. K180 contacts NAD(+).

This sequence belongs to the short-chain dehydrogenases/reductases (SDR) family. Homotetramer. Highly expressed in trachea and epidermis. Detected at lower levels in spinal cord, bone marrow, brain, tongue, esophagus, heart, colon, testis, placenta, lung, skeletal muscle and lymph node.

Its subcellular location is the microsome membrane. It is found in the endoplasmic reticulum membrane. It carries out the reaction 3beta-hydroxy-5alpha-pregnane-20-one + NAD(+) = 5alpha-pregnane-3,20-dione + NADH + H(+). The enzyme catalyses 17beta-hydroxy-5alpha-androstan-3-one + NAD(+) = 5alpha-androstan-3,17-dione + NADH + H(+). The catalysed reaction is androsterone + NAD(+) = 5alpha-androstan-3,17-dione + NADH + H(+). It catalyses the reaction 5alpha-androstane-3alpha,17beta-diol + NAD(+) = 17beta-hydroxy-5alpha-androstan-3-one + NADH + H(+). It carries out the reaction all-trans-retinol + NAD(+) = all-trans-retinal + NADH + H(+). The enzyme catalyses 3alpha-hydroxy-5alpha-pregnan-20-one + NAD(+) = 5alpha-pregnane-3,20-dione + NADH + H(+). Its function is as follows. 3-alpha-hydroxysteroid dehydrogenase that converts 3-alpha-tetrahydroprogesterone (allopregnanolone) to dihydroxyprogesterone and 3-alpha-androstanediol to dihydroxyprogesterone. Also plays a role in the biosynthesis of retinoic acid from retinaldehyde. Can utilize both NADH and NADPH. This Homo sapiens (Human) protein is Dehydrogenase/reductase SDR family member 9 (DHRS9).